Reading from the N-terminus, the 679-residue chain is Glycine--tRNA ligase beta subunit (679 aa).

This sequence belongs to the class-II aminoacyl-tRNA synthetase family. In terms of assembly, tetramer of two alpha and two beta subunits.

Its subcellular location is the cytoplasm. It carries out the reaction tRNA(Gly) + glycine + ATP = glycyl-tRNA(Gly) + AMP + diphosphate. This is Glycine--tRNA ligase beta subunit (glyS) from Bacillus subtilis (strain 168).